Consider the following 122-residue polypeptide: Large ribosomal subunit protein uL14 (122 aa).

It belongs to the universal ribosomal protein uL14 family. As to quaternary structure, part of the 50S ribosomal subunit. Forms a cluster with proteins L3 and L19. In the 70S ribosome, L14 and L19 interact and together make contacts with the 16S rRNA in bridges B5 and B8.

Its function is as follows. Binds to 23S rRNA. Forms part of two intersubunit bridges in the 70S ribosome. This is Large ribosomal subunit protein uL14 from Leuconostoc citreum (strain KM20).